The primary structure comprises 149 residues: 3-dehydroquinate dehydratase (149 aa).

Residue Tyr23 is the Proton acceptor of the active site. Substrate is bound by residues Asn75, His81, and Asp88. His101 serves as the catalytic Proton donor. Residues Met102–Ser103 and Arg112 contribute to the substrate site.

Belongs to the type-II 3-dehydroquinase family. Homododecamer.

It carries out the reaction 3-dehydroquinate = 3-dehydroshikimate + H2O. It functions in the pathway metabolic intermediate biosynthesis; chorismate biosynthesis; chorismate from D-erythrose 4-phosphate and phosphoenolpyruvate: step 3/7. Catalyzes a trans-dehydration via an enolate intermediate. The sequence is that of 3-dehydroquinate dehydratase from Pelobacter propionicus (strain DSM 2379 / NBRC 103807 / OttBd1).